A 239-amino-acid polypeptide reads, in one-letter code: UDP-2,3-diacylglucosamine hydrolase (239 aa).

The Mn(2+) site is built by Asp-8, His-10, Asp-41, Asn-78, and His-113. Residue 78–79 participates in substrate binding; it reads NR. The substrate site is built by Asp-121, Ser-159, Asn-163, Lys-166, and His-194. Residues His-194 and His-196 each coordinate Mn(2+).

The protein belongs to the LpxH family. Mn(2+) serves as cofactor.

The protein resides in the cell inner membrane. It carries out the reaction UDP-2-N,3-O-bis[(3R)-3-hydroxytetradecanoyl]-alpha-D-glucosamine + H2O = 2-N,3-O-bis[(3R)-3-hydroxytetradecanoyl]-alpha-D-glucosaminyl 1-phosphate + UMP + 2 H(+). The protein operates within glycolipid biosynthesis; lipid IV(A) biosynthesis; lipid IV(A) from (3R)-3-hydroxytetradecanoyl-[acyl-carrier-protein] and UDP-N-acetyl-alpha-D-glucosamine: step 4/6. In terms of biological role, hydrolyzes the pyrophosphate bond of UDP-2,3-diacylglucosamine to yield 2,3-diacylglucosamine 1-phosphate (lipid X) and UMP by catalyzing the attack of water at the alpha-P atom. Involved in the biosynthesis of lipid A, a phosphorylated glycolipid that anchors the lipopolysaccharide to the outer membrane of the cell. In Shewanella oneidensis (strain ATCC 700550 / JCM 31522 / CIP 106686 / LMG 19005 / NCIMB 14063 / MR-1), this protein is UDP-2,3-diacylglucosamine hydrolase.